Reading from the N-terminus, the 293-residue chain is 4-hydroxy-tetrahydrodipicolinate synthase (293 aa).

Thr-45 is a binding site for pyruvate. Residue Tyr-133 is the Proton donor/acceptor of the active site. The Schiff-base intermediate with substrate role is filled by Lys-161. Position 203 (Ile-203) interacts with pyruvate.

Belongs to the DapA family. Homotetramer; dimer of dimers.

It localises to the cytoplasm. It catalyses the reaction L-aspartate 4-semialdehyde + pyruvate = (2S,4S)-4-hydroxy-2,3,4,5-tetrahydrodipicolinate + H2O + H(+). It functions in the pathway amino-acid biosynthesis; L-lysine biosynthesis via DAP pathway; (S)-tetrahydrodipicolinate from L-aspartate: step 3/4. Its function is as follows. Catalyzes the condensation of (S)-aspartate-beta-semialdehyde [(S)-ASA] and pyruvate to 4-hydroxy-tetrahydrodipicolinate (HTPA). The chain is 4-hydroxy-tetrahydrodipicolinate synthase from Shewanella denitrificans (strain OS217 / ATCC BAA-1090 / DSM 15013).